The sequence spans 84 residues: Small ribosomal subunit protein bS18A (84 aa).

This sequence belongs to the bacterial ribosomal protein bS18 family. In terms of assembly, part of the 30S ribosomal subunit. Forms a tight heterodimer with protein bS6.

Its function is as follows. Binds as a heterodimer with protein bS6 to the central domain of the 16S rRNA, where it helps stabilize the platform of the 30S subunit. The protein is Small ribosomal subunit protein bS18A (rpsR1) of Mycobacterium bovis (strain ATCC BAA-935 / AF2122/97).